The chain runs to 137 residues: Large ribosomal subunit protein uL16 (137 aa).

The protein belongs to the universal ribosomal protein uL16 family. In terms of assembly, part of the 50S ribosomal subunit.

Functionally, binds 23S rRNA and is also seen to make contacts with the A and possibly P site tRNAs. This chain is Large ribosomal subunit protein uL16, found in Pseudomonas paraeruginosa (strain DSM 24068 / PA7) (Pseudomonas aeruginosa (strain PA7)).